We begin with the raw amino-acid sequence, 205 residues long: Helix-loop-helix protein 4 (205 aa).

The segment at 3–16 (MVVAKRNARERTRV) is basic motif. In terms of domain architecture, bHLH spans 3–56 (MVVAKRNARERTRVHTVNQAFLVLKQHLPSLRQFTKRVSKLRILNAAITYIDTL). The tract at residues 17–56 (HTVNQAFLVLKQHLPSLRQFTKRVSKLRILNAAITYIDTL) is helix-loop-helix motif.

In terms of tissue distribution, expressed in the ADL sensory neurons.

It localises to the nucleus. Functionally, acts as a transcriptional regulator. May mediate transcriptional activation by binding to the E-box motif 5'-CANNTG-3'. Required for the correct morphology, terminal identity and function of the ADL sensory neurons by controlling the expression of the ADL-specific gene repertoire, including chemoreceptor encoding genes, ion channel encoding genes, neuropeptides and the neurotransmitter eat-4. Regulates the expression of the srh-234 chemoreceptor encoding gene in the ADL neurons under feeding conditions. Plays a role in the chemorepulsive response toward ascaroside pheromones mediated by the ADL sensory neurons. This is Helix-loop-helix protein 4 (hlh-4) from Caenorhabditis elegans.